A 211-amino-acid chain; its full sequence is Large ribosomal subunit protein uL3 (211 aa).

Q150 carries the N5-methylglutamine modification.

It belongs to the universal ribosomal protein uL3 family. As to quaternary structure, part of the 50S ribosomal subunit. Forms a cluster with proteins L14 and L19. Post-translationally, methylated by PrmB.

Its function is as follows. One of the primary rRNA binding proteins, it binds directly near the 3'-end of the 23S rRNA, where it nucleates assembly of the 50S subunit. This is Large ribosomal subunit protein uL3 from Pseudomonas aeruginosa (strain LESB58).